The primary structure comprises 751 residues: Catalase-peroxidase 2 (751 aa).

The N-terminal stretch at 1–27 (MFKKTVPLLSAVAIAISFSAGTGVANA) is a signal peptide. The tryptophyl-tyrosyl-methioninium (Trp-Tyr) (with M-264) cross-link spans 115 to 238 (WHGAGTYRVQ…LAAVQMGLIY (124 aa)). The active-site Proton acceptor is His116. The tryptophyl-tyrosyl-methioninium (Tyr-Met) (with W-115) cross-link spans 238–264 (YVNPEGPNGKPDPLLAAKDIRDTFGRM). His279 lines the heme b pocket.

This sequence belongs to the peroxidase family. Peroxidase/catalase subfamily. In terms of assembly, homodimer or homotetramer. It depends on heme b as a cofactor. Post-translationally, formation of the three residue Trp-Tyr-Met cross-link is important for the catalase, but not the peroxidase activity of the enzyme.

The enzyme catalyses H2O2 + AH2 = A + 2 H2O. It carries out the reaction 2 H2O2 = O2 + 2 H2O. In terms of biological role, bifunctional enzyme with both catalase and broad-spectrum peroxidase activity. This is Catalase-peroxidase 2 from Idiomarina loihiensis (strain ATCC BAA-735 / DSM 15497 / L2-TR).